The sequence spans 186 residues: ATP synthase subunit delta (186 aa).

The protein belongs to the ATPase delta chain family. F-type ATPases have 2 components, F(1) - the catalytic core - and F(0) - the membrane proton channel. F(1) has five subunits: alpha(3), beta(3), gamma(1), delta(1), epsilon(1). CF(0) has four main subunits: a(1), b(1), b'(1) and c(10-14). The alpha and beta chains form an alternating ring which encloses part of the gamma chain. F(1) is attached to F(0) by a central stalk formed by the gamma and epsilon chains, while a peripheral stalk is formed by the delta, b and b' chains.

The protein resides in the cell inner membrane. Functionally, f(1)F(0) ATP synthase produces ATP from ADP in the presence of a proton or sodium gradient. F-type ATPases consist of two structural domains, F(1) containing the extramembraneous catalytic core and F(0) containing the membrane proton channel, linked together by a central stalk and a peripheral stalk. During catalysis, ATP synthesis in the catalytic domain of F(1) is coupled via a rotary mechanism of the central stalk subunits to proton translocation. This protein is part of the stalk that links CF(0) to CF(1). It either transmits conformational changes from CF(0) to CF(1) or is implicated in proton conduction. This chain is ATP synthase subunit delta, found in Dinoroseobacter shibae (strain DSM 16493 / NCIMB 14021 / DFL 12).